The primary structure comprises 944 residues: Protein translocase subunit SecA (944 aa).

Residues Gln90, Gly108–Thr112, and Asp509 each bind ATP. The interval Val533–Ser565 is disordered.

It belongs to the SecA family. As to quaternary structure, monomer and homodimer. Part of the essential Sec protein translocation apparatus which comprises SecA, SecYEG and auxiliary proteins SecDF. Other proteins may also be involved.

The protein resides in the cell inner membrane. It localises to the cellular thylakoid membrane. It is found in the cytoplasm. It catalyses the reaction ATP + H2O + cellular proteinSide 1 = ADP + phosphate + cellular proteinSide 2.. In terms of biological role, part of the Sec protein translocase complex. Interacts with the SecYEG preprotein conducting channel. Has a central role in coupling the hydrolysis of ATP to the transfer of proteins into and across the cell membrane, serving as an ATP-driven molecular motor driving the stepwise translocation of polypeptide chains across the membrane. Functionally, probably participates in protein translocation into and across both the cytoplasmic and thylakoid membranes in cyanobacterial cells. The chain is Protein translocase subunit SecA from Prochlorococcus marinus (strain NATL1A).